Reading from the N-terminus, the 1678-residue chain is Serine/threonine-protein kinase pakD (1678 aa).

Over residues 1–15 (MSRLQPQQQQRGRSS) the composition is skewed to low complexity. Disordered regions lie at residues 1–73 (MSRL…NNKF), 180–224 (NSNS…PNKN), 262–428 (QLSS…NNNN), and 442–489 (KRKS…SQSS). The segment covering 17–34 (FKDNFQIQKPLQSLTPSE) has biased composition (polar residues). Composition is skewed to low complexity over residues 35–73 (QQQQ…NNKF) and 180–214 (NSNS…NNNN). Residues 82–189 (KNVENDIKKW…NSNSSKTTTN (108 aa)) enclose the Calponin-homology (CH) domain. A compositionally biased stretch (polar residues) spans 215–224 (RAIITSPNKN). Composition is skewed to low complexity over residues 276 to 359 (NNNN…NINN) and 399 to 428 (NNNN…NNNN). The segment covering 460-472 (DSSDSSDSSDSDS) has biased composition (acidic residues). Coiled coils occupy residues 512 to 542 (KQDK…KKLL) and 570 to 628 (TRQI…YANT). Composition is skewed to low complexity over residues 631-654 (SSNS…INGS), 662-671 (NSSTSKGTLS), and 695-713 (NSHQ…QTTS). Disordered stretches follow at residues 631-672 (SSNS…TLSR) and 693-722 (PVNS…ASYN). Residues 752–862 (VSATLQQKQQ…QNQQINNLID (111 aa)) are a coiled coil. The segment at 1141 to 1197 (PHSFVLKSFRIISECNYCRQYIWGVRGIVAREAFECVGCKYKTHKKCLKEASEKTFC) adopts a Phorbol-ester/DAG-type zinc-finger fold. The CRIB domain occupies 1202–1215 (VGAPFNVKHEMHVG). Disordered stretches follow at residues 1267-1292 (LTNN…QQNQ) and 1323-1346 (NNTY…PNNN). The stretch at 1269-1309 (NNSNNNNNNNNSNNNLQQQQQQNQQLKQKLNITNNQQNNTI) forms a coiled coil. Residues 1376–1647 (YKVREVVGGG…AHYLLRHPFL (272 aa)) form the Protein kinase domain. ATP is bound by residues 1382–1390 (VGGGSTGKV) and Lys-1405. The active-site Proton acceptor is the Asp-1515.

It belongs to the protein kinase superfamily. STE Ser/Thr protein kinase family. STE20 subfamily. Mg(2+) serves as cofactor.

The enzyme catalyses L-seryl-[protein] + ATP = O-phospho-L-seryl-[protein] + ADP + H(+). The catalysed reaction is L-threonyl-[protein] + ATP = O-phospho-L-threonyl-[protein] + ADP + H(+). This Dictyostelium discoideum (Social amoeba) protein is Serine/threonine-protein kinase pakD.